Consider the following 309-residue polypeptide: Homoserine kinase (309 aa).

Residue 91 to 101 (PIGSGLGSSAC) participates in ATP binding.

This sequence belongs to the GHMP kinase family. Homoserine kinase subfamily.

Its subcellular location is the cytoplasm. The enzyme catalyses L-homoserine + ATP = O-phospho-L-homoserine + ADP + H(+). It participates in amino-acid biosynthesis; L-threonine biosynthesis; L-threonine from L-aspartate: step 4/5. Catalyzes the ATP-dependent phosphorylation of L-homoserine to L-homoserine phosphate. This is Homoserine kinase from Buchnera aphidicola subsp. Acyrthosiphon pisum (strain 5A).